A 516-amino-acid chain; its full sequence is Thioredoxin reductase 2, mitochondrial (516 aa).

62–79 (DYVKPTPVGTKWGIGGTC) serves as a coordination point for FAD. A disulfide bridge connects residues Cys-79 and Cys-84. His-489 (proton acceptor) is an active-site residue.

Belongs to the class-I pyridine nucleotide-disulfide oxidoreductase family. As to quaternary structure, homodimer. It depends on FAD as a cofactor.

The protein localises to the mitochondrion. The enzyme catalyses [thioredoxin]-dithiol + NADP(+) = [thioredoxin]-disulfide + NADPH + H(+). Thioredoxin system is a major player in glutathione metabolism, due to the demonstrated absence of a glutathione reductase. Functionally interacts with the Sod/Cat reactive oxidation species (ROS) defense system and thereby has a role in preadult development and life span. Lack of a glutathione reductase suggests antioxidant defense in Drosophila, and probably in related insects, differs fundamentally from that in other organisms. In Drosophila melanogaster (Fruit fly), this protein is Thioredoxin reductase 2, mitochondrial.